A 517-amino-acid chain; its full sequence is Bifunctional purine biosynthesis protein PurH (517 aa).

The MGS-like domain occupies M1–V145.

This sequence belongs to the PurH family.

The enzyme catalyses (6R)-10-formyltetrahydrofolate + 5-amino-1-(5-phospho-beta-D-ribosyl)imidazole-4-carboxamide = 5-formamido-1-(5-phospho-D-ribosyl)imidazole-4-carboxamide + (6S)-5,6,7,8-tetrahydrofolate. The catalysed reaction is IMP + H2O = 5-formamido-1-(5-phospho-D-ribosyl)imidazole-4-carboxamide. The protein operates within purine metabolism; IMP biosynthesis via de novo pathway; 5-formamido-1-(5-phospho-D-ribosyl)imidazole-4-carboxamide from 5-amino-1-(5-phospho-D-ribosyl)imidazole-4-carboxamide (10-formyl THF route): step 1/1. Its pathway is purine metabolism; IMP biosynthesis via de novo pathway; IMP from 5-formamido-1-(5-phospho-D-ribosyl)imidazole-4-carboxamide: step 1/1. This is Bifunctional purine biosynthesis protein PurH from Prochlorococcus marinus (strain MIT 9312).